The chain runs to 444 residues: Glutamate--tRNA ligase (444 aa).

The 'HIGH' region motif lies at 12–22 (PSPTGFLHVGG). The 'KMSKS' region signature appears at 213–217 (KMSKR). K216 lines the ATP pocket.

Belongs to the class-I aminoacyl-tRNA synthetase family. Glutamate--tRNA ligase type 1 subfamily. As to quaternary structure, monomer.

The protein resides in the cytoplasm. The catalysed reaction is tRNA(Glu) + L-glutamate + ATP = L-glutamyl-tRNA(Glu) + AMP + diphosphate. Catalyzes the attachment of glutamate to tRNA(Glu) in a two-step reaction: glutamate is first activated by ATP to form Glu-AMP and then transferred to the acceptor end of tRNA(Glu). The protein is Glutamate--tRNA ligase of Methylacidiphilum infernorum (isolate V4) (Methylokorus infernorum (strain V4)).